We begin with the raw amino-acid sequence, 572 residues long: Asparagine--tRNA ligase, cytoplasmic 1 (572 aa).

Alanine 2 is modified (N-acetylalanine). Positions 53–131 form a DNA-binding region, OB; the sequence is VRIGGWVKSG…QQIELNVVKV (79 aa). Positions 236–292 constitute a WHEP-TRS domain; it reads DVEAARLIVIERGNVVAELKAAKASKEAITAAVAELKIAKETFAHIDERSRLRPGLP.

This sequence belongs to the class-II aminoacyl-tRNA synthetase family.

It is found in the cytoplasm. The protein resides in the cytosol. It catalyses the reaction tRNA(Asn) + L-asparagine + ATP = L-asparaginyl-tRNA(Asn) + AMP + diphosphate + H(+). The protein is Asparagine--tRNA ligase, cytoplasmic 1 of Arabidopsis thaliana (Mouse-ear cress).